A 20-amino-acid chain; its full sequence is VVGGEVARAHSWPWQISLQY.

Residues 1-20 form the Peptidase S1 domain; the sequence is VVGGEVARAHSWPWQISLQY.

This sequence belongs to the peptidase S1 family. Elastase subfamily.

In terms of biological role, digests most rapidly at the C-terminal side of alanine residues, but also cleaves at valine and leucine residues. The polypeptide is Elastase (Gadus morhua (Atlantic cod)).